A 121-amino-acid chain; its full sequence is Heimdall profilin (121 aa).

This sequence belongs to the Asgard profilin family.

It is found in the cytoplasm. Its subcellular location is the cytoskeleton. Binds to actin and affects the structure of the cytoskeleton. At high concentrations inhibits spontaneous rabbit actin nucleation. This strongly suggests this archaea has a profilin-regulated actin system, and actin-type genes can be identified in this organism. The protein is Heimdall profilin of Heimdallarchaeota archaeon (strain LC_2).